Consider the following 358-residue polypeptide: Aromatic amino acid aminotransferase (358 aa).

N6-(pyridoxal phosphate)lysine is present on lysine 219.

The protein belongs to the class-II pyridoxal-phosphate-dependent aminotransferase family. Homodimer. It depends on pyridoxal 5'-phosphate as a cofactor.

It catalyses the reaction an aromatic L-alpha-amino acid + 2-oxoglutarate = an aromatic oxo-acid + L-glutamate. In terms of biological role, aminotransferase that catalyzes the conversion of aromatic amino acids and 2-oxoglutarate into corresponding aromatic oxo acids and L-glutamate. This chain is Aromatic amino acid aminotransferase, found in Nocardia farcinica (strain IFM 10152).